The primary structure comprises 221 residues: Ribonuclease T (221 aa).

The Exonuclease domain maps to 21–195 (VVVDVETAGF…YDAEKTADLF (175 aa)). Positions 24, 26, 182, and 187 each coordinate Mg(2+). Catalysis depends on histidine 182, which acts as the Proton donor/acceptor.

It belongs to the RNase T family. In terms of assembly, homodimer. It depends on Mg(2+) as a cofactor.

Trims short 3' overhangs of a variety of RNA species, leaving a one or two nucleotide 3' overhang. Responsible for the end-turnover of tRNA: specifically removes the terminal AMP residue from uncharged tRNA (tRNA-C-C-A). Also appears to be involved in tRNA biosynthesis. The chain is Ribonuclease T from Marinobacter nauticus (strain ATCC 700491 / DSM 11845 / VT8) (Marinobacter aquaeolei).